The primary structure comprises 234 residues: Large ribosomal subunit protein uL1 (234 aa).

Belongs to the universal ribosomal protein uL1 family. In terms of assembly, part of the 50S ribosomal subunit.

Its function is as follows. Binds directly to 23S rRNA. The L1 stalk is quite mobile in the ribosome, and is involved in E site tRNA release. In terms of biological role, protein L1 is also a translational repressor protein, it controls the translation of the L11 operon by binding to its mRNA. In Tolumonas auensis (strain DSM 9187 / NBRC 110442 / TA 4), this protein is Large ribosomal subunit protein uL1.